A 554-amino-acid chain; its full sequence is MTNEYLAPFVDELFNLGVREAVFSPGSRSTALAMLFEEYKKYDTYVNIDERSAAFFALGIAKANRRPVVLVCTSGSAAAHHFPAITEAKMSRIPLIILTADRPAELQFVGAPQTLDQTRFFGNFVNHFENLEAPQPQAKNFWTYPRKVAQRAFLSALDQMAGPVQINVPLRDPLVPKLKSENYEKGRYKLPFKFFKGQQSAFFDEALLSSKTLILAGANSAENYSESLLKLAEQLKAPILADPLSNLRNHNSPFVMDSYDAFLANDDLKTDLKAESILLFGQMPVSKRLQQFIALNDEAQFIQVDPALVYRNPSLTTTIMVQSNVTTFANSIQKVNQDFSYLEKWQKAQEKMRHQLEKVAQEENPFEGRFVQELQKHLKALDAQLLVSNSMEIRDIDYWWEKEDSKVRILGNRGVNGIDGTESTALGIATTGKPTVLLTGDLSMLHDLNGLIIGKTHELNLTIVLFNNDGGGIFHHLAQKGVPNFDYLFSTPHGLNFEGLAELTGLDYHLVSNYADFGQQFETSICQPGIHLLEIKTDKDLSLALHKKYTAYEN.

This sequence belongs to the TPP enzyme family. MenD subfamily. Homodimer. The cofactor is Mg(2+). It depends on Mn(2+) as a cofactor. Thiamine diphosphate is required as a cofactor.

It catalyses the reaction isochorismate + 2-oxoglutarate + H(+) = 5-enolpyruvoyl-6-hydroxy-2-succinyl-cyclohex-3-ene-1-carboxylate + CO2. The protein operates within quinol/quinone metabolism; 1,4-dihydroxy-2-naphthoate biosynthesis; 1,4-dihydroxy-2-naphthoate from chorismate: step 2/7. It functions in the pathway quinol/quinone metabolism; menaquinone biosynthesis. Catalyzes the thiamine diphosphate-dependent decarboxylation of 2-oxoglutarate and the subsequent addition of the resulting succinic semialdehyde-thiamine pyrophosphate anion to isochorismate to yield 2-succinyl-5-enolpyruvyl-6-hydroxy-3-cyclohexene-1-carboxylate (SEPHCHC). This is 2-succinyl-5-enolpyruvyl-6-hydroxy-3-cyclohexene-1-carboxylate synthase from Lactococcus lactis subsp. cremoris (strain SK11).